Reading from the N-terminus, the 188-residue chain is Calcium load-activated calcium channel (188 aa).

The Lumenal segment spans residues 1–4; it reads MSTM. The chain crosses the membrane as a helical span at residues 5–32; it reads FADTILIVFISICTALLAEGITWVLVYR. The stretch at 32-89 forms a coiled coil; sequence RTDKYKRLKAEVEKQSKKLEKKKETITESAGRQQKKKIERQEEKLKNNNRDLSMVRMK. Over 33-86 the chain is Cytoplasmic; it reads TDKYKRLKAEVEKQSKKLEKKKETITESAGRQQKKKIERQEEKLKNNNRDLSMV. A helical transmembrane segment spans residues 87-106; sequence RMKSMFAIGFCFTALMGMFN. Residues 107 to 120 lie on the Lumenal side of the membrane; sequence SIFDGRVVAKLPFV. The stretch at 121–130 is an intramembrane region; that stretch reads PLSYIQGLSH. Residues 131–140 lie on the Lumenal side of the membrane; the sequence is RNLLGEDYTD. The chain crosses the membrane as a helical span at residues 141 to 162; that stretch reads CSFIFLYILCTMSIRQNIQKML. Over 163–188 the chain is Cytoplasmic; that stretch reads GLAPSRAATKQAGGFLGPPPQAAKFS.

Belongs to the TMCO1 family. In terms of assembly, homodimer and homotetramer. Component of the multi-pass translocon (MPT) complex.

It is found in the endoplasmic reticulum membrane. The protein localises to the golgi apparatus membrane. Functionally, calcium-selective channel required to prevent calcium stores from overfilling, thereby playing a key role in calcium homeostasis. In response to endoplasmic reticulum (ER) overloading, assembles into a homotetramer, forming a functional calcium-selective channel, regulating the calcium content in endoplasmic reticulum store. Component of the multi-pass translocon (MPT) complex that mediates insertion of multi-pass membrane proteins into the lipid bilayer of membranes. The sequence is that of Calcium load-activated calcium channel from Danio rerio (Zebrafish).